The sequence spans 170 residues: Calcineurin subunit B type 2 (170 aa).

A lipid anchor (N-myristoyl glycine) is attached at glycine 2. EF-hand domains lie at 18-46 (DEIK…FTSM), 50-85 (QENP…FSVR), 87-122 (DEEQ…MVGD), and 128-163 (QLQQ…LEIH). Ca(2+)-binding residues include aspartate 63, aspartate 65, aspartate 67, glutamine 69, glutamate 74, aspartate 100, aspartate 102, aspartate 104, tyrosine 106, and glutamate 111. The interval 131–136 (QLVDKT) is calcineurin A binding. Residues aspartate 141, aspartate 143, aspartate 145, lysine 147, and glutamate 152 each contribute to the Ca(2+) site.

This sequence belongs to the calcineurin regulatory subunit family. As to quaternary structure, forms a complex composed of a calmodulin-dependent catalytic subunit (also known as calcineurin A) and a regulatory Ca(2+)-binding subunit (also known as calcineurin B). There are three catalytic subunits, each encoded by a separate gene (PPP3CA, PPP3CB, and PPP3CC) and two regulatory subunits which are also encoded by separate genes (PPP3R1 and PPP3R2). Interacts with SPATA33 (via PQIIIT motif).

Its subcellular location is the mitochondrion. In terms of biological role, regulatory subunit of calcineurin, a calcium-dependent, calmodulin stimulated protein phosphatase. Confers calcium sensitivity. The polypeptide is Calcineurin subunit B type 2 (PPP3R2) (Bos taurus (Bovine)).